Reading from the N-terminus, the 691-residue chain is Elongation factor G (691 aa).

A tr-type G domain is found at 12–286 (NKLRNIGIMA…GIVRYLPSPL (275 aa)). GTP-binding positions include 21-28 (AHIDAGKT), 85-89 (DTPGH), and 139-142 (NKMD).

It belongs to the TRAFAC class translation factor GTPase superfamily. Classic translation factor GTPase family. EF-G/EF-2 subfamily.

The protein resides in the cytoplasm. Functionally, catalyzes the GTP-dependent ribosomal translocation step during translation elongation. During this step, the ribosome changes from the pre-translocational (PRE) to the post-translocational (POST) state as the newly formed A-site-bound peptidyl-tRNA and P-site-bound deacylated tRNA move to the P and E sites, respectively. Catalyzes the coordinated movement of the two tRNA molecules, the mRNA and conformational changes in the ribosome. The chain is Elongation factor G from Fervidobacterium nodosum (strain ATCC 35602 / DSM 5306 / Rt17-B1).